Consider the following 1437-residue polypeptide: CRISPR-associated endoribonuclease Cas13a (1437 aa).

HEPN-like fold regions lie at residues 460–626 (LNAS…AMFE) and 1101–1437 (EFRD…QLKN). The segment at 1377–1419 (EVKEKKKPSDNNTGKGYSKRDRQQDRKEYDKYKEKKKKEGNFL) is disordered. Over residues 1394 to 1416 (SKRDRQQDRKEYDKYKEKKKKEG) the composition is skewed to basic and acidic residues.

This sequence belongs to the CRISPR-associated endoribonuclease Cas13a family. Requires a divalent metal cation as cofactor.

Its activity is regulated as follows. Target RNA acts as an activator for non-specific ssRNA degradation. In terms of biological role, CRISPR (clustered regularly interspaced short palindromic repeat), is an adaptive immune system that provides protection against mobile genetic elements (viruses, transposable elements and conjugative plasmids). CRISPR clusters contain sequences complementary to antecedent mobile elements and target invading nucleic acids. Unlike many single-component effectors, this CRISPR-Cas system targets RNA. CRISPR clusters are transcribed from pre-CRISPR RNA (crRNA) and processed into crRNA by this protein. Cleaves linear target ssRNA in a pre-crRNA-dependent fashion, preferentially around A residues. Binding a viable target RNA target activates this protein for non-specific RNA degradation in vitro (called collateral RNA degradation), but it is not very sensitive as it requires nanomolar levels of viable target RNA. The sequence is that of CRISPR-associated endoribonuclease Cas13a from Lachnospiraceae bacterium (strain NK4A179).